The primary structure comprises 300 residues: m7GpppN-mRNA hydrolase NUDT17 (300 aa).

Residues 88–239 (SRGVDVGVAV…KECVQIPADL (152 aa)) form the Nudix hydrolase domain. Residues 127 to 148 (GHVELDEKLLDAGLRELLEETG) carry the Nudix box motif. Residues glutamate 142 and glutamate 146 each coordinate Mg(2+).

This sequence belongs to the Nudix hydrolase family. Requires Mg(2+) as cofactor. The cofactor is Mn(2+).

It catalyses the reaction a 5'-end (N(7)-methyl 5'-triphosphoguanosine)-ribonucleoside in mRNA + H2O = N(7)-methyl-GDP + a 5'-end phospho-ribonucleoside in mRNA + 2 H(+). Acts as a decapping enzyme capable of hydrolyzing monomethylated capped RNAs (in vitro). Hydrolyzes monomethylated capped RNA after alpha and beta phosphates to form N(7)-methyl-GDP. Shows low activity towards unmethylated capped RNA. The protein is m7GpppN-mRNA hydrolase NUDT17 (nudt17) of Danio rerio (Zebrafish).